The chain runs to 282 residues: Acetyl-coenzyme A carboxylase carboxyl transferase subunit beta (282 aa).

Residues 25–282 (VWRKCPHCNE…SQMLRIFMKQ (258 aa)) enclose the CoA carboxyltransferase N-terminal domain. Residues cysteine 29, cysteine 32, cysteine 48, and cysteine 51 each coordinate Zn(2+). The C4-type zinc finger occupies 29–51 (CPHCNEIIYAKEIERNLNVCPKC).

This sequence belongs to the AccD/PCCB family. In terms of assembly, acetyl-CoA carboxylase is a heterohexamer composed of biotin carboxyl carrier protein (AccB), biotin carboxylase (AccC) and two subunits each of ACCase subunit alpha (AccA) and ACCase subunit beta (AccD). Requires Zn(2+) as cofactor.

The protein resides in the cytoplasm. It carries out the reaction N(6)-carboxybiotinyl-L-lysyl-[protein] + acetyl-CoA = N(6)-biotinyl-L-lysyl-[protein] + malonyl-CoA. It participates in lipid metabolism; malonyl-CoA biosynthesis; malonyl-CoA from acetyl-CoA: step 1/1. Functionally, component of the acetyl coenzyme A carboxylase (ACC) complex. Biotin carboxylase (BC) catalyzes the carboxylation of biotin on its carrier protein (BCCP) and then the CO(2) group is transferred by the transcarboxylase to acetyl-CoA to form malonyl-CoA. In Syntrophotalea carbinolica (strain DSM 2380 / NBRC 103641 / GraBd1) (Pelobacter carbinolicus), this protein is Acetyl-coenzyme A carboxylase carboxyl transferase subunit beta.